A 241-amino-acid chain; its full sequence is Large ribosomal subunit protein uL3 (241 aa).

The segment at 140–168 (SHRSIGSTGGRQDPGKTFKNKKMPGHMGD) is disordered. Gln151 carries the post-translational modification N5-methylglutamine.

The protein belongs to the universal ribosomal protein uL3 family. In terms of assembly, part of the 50S ribosomal subunit. Forms a cluster with proteins L14 and L19. In terms of processing, methylated by PrmB.

One of the primary rRNA binding proteins, it binds directly near the 3'-end of the 23S rRNA, where it nucleates assembly of the 50S subunit. This Azorhizobium caulinodans (strain ATCC 43989 / DSM 5975 / JCM 20966 / LMG 6465 / NBRC 14845 / NCIMB 13405 / ORS 571) protein is Large ribosomal subunit protein uL3.